A 329-amino-acid polypeptide reads, in one-letter code: Glycerol-3-phosphate dehydrogenase [NAD(P)+] (329 aa).

Residues S13, W14, H34, and K105 each coordinate NADPH. The sn-glycerol 3-phosphate site is built by K105, G134, and S136. An NADPH-binding site is contributed by A138. Positions 189, 242, 252, 253, and 254 each coordinate sn-glycerol 3-phosphate. Residue K189 is the Proton acceptor of the active site. Residue R253 coordinates NADPH. NADPH-binding residues include V277 and E279.

The protein belongs to the NAD-dependent glycerol-3-phosphate dehydrogenase family.

The protein localises to the cytoplasm. It carries out the reaction sn-glycerol 3-phosphate + NAD(+) = dihydroxyacetone phosphate + NADH + H(+). The catalysed reaction is sn-glycerol 3-phosphate + NADP(+) = dihydroxyacetone phosphate + NADPH + H(+). It participates in membrane lipid metabolism; glycerophospholipid metabolism. Catalyzes the reduction of the glycolytic intermediate dihydroxyacetone phosphate (DHAP) to sn-glycerol 3-phosphate (G3P), the key precursor for phospholipid synthesis. The polypeptide is Glycerol-3-phosphate dehydrogenase [NAD(P)+] (Legionella pneumophila (strain Paris)).